Reading from the N-terminus, the 1378-residue chain is S-cell enriched with leucine-rich repeat-containing protein slrA (1378 aa).

A helical membrane pass occupies residues I17–V37. N59, N112, N143, N172, and N201 each carry an N-linked (GlcNAc...) asparagine glycan. LRR repeat units follow at residues N143–L165, H167–K188, S191–K212, A213–P235, N236–R257, S260–S281, R282–K304, S307–H329, and P331–A353. N265, N287, and N296 each carry an N-linked (GlcNAc...) asparagine glycan. N-linked (GlcNAc...) asparagine glycans are attached at residues N416, N436, N451, N491, N513, N596, N605, N634, N704, N710, N740, N741, N771, N788, N801, N826, N843, N861, N875, and N907. The stretch at S886–K946 forms a coiled coil. The segment covering N891–S909 has biased composition (low complexity). The tract at residues N891–N945 is disordered. Positions V915 to D924 are enriched in acidic residues. Positions N929–N945 are enriched in low complexity. 4 N-linked (GlcNAc...) asparagine glycosylation sites follow: N953, N970, N1090, and N1100. Residues Y1160–V1180 form a helical membrane-spanning segment. A compositionally biased stretch (low complexity) spans D1227–N1276. Residues D1227–K1378 form a disordered region. Positions D1289–E1304 are enriched in basic and acidic residues. Over residues K1305–T1324 the composition is skewed to acidic residues. A compositionally biased stretch (low complexity) spans S1328–S1353. 2 N-linked (GlcNAc...) asparagine glycosylation sites follow: N1331 and N1360. Positions F1354–I1364 are enriched in polar residues. Positions K1368 to K1378 are enriched in basic residues.

It is found in the membrane. The chain is S-cell enriched with leucine-rich repeat-containing protein slrA (slrA) from Dictyostelium discoideum (Social amoeba).